The chain runs to 90 residues: Small ribosomal subunit protein bS20 (90 aa).

Belongs to the bacterial ribosomal protein bS20 family.

Its function is as follows. Binds directly to 16S ribosomal RNA. This is Small ribosomal subunit protein bS20 from Francisella tularensis subsp. tularensis (strain FSC 198).